The primary structure comprises 147 residues: Hemoglobin subunit epsilon (147 aa).

The Globin domain occupies 3-147; it reads HLTAEEKSSV…VATALAHKYH (145 aa). Ser-14 and Ser-51 each carry phosphoserine. Residues His-64 and His-93 each contribute to the heme b site.

It belongs to the globin family. Heterotetramer of two alpha chains and two epsilon chains in early embryonic hemoglobin Gower-2; two zeta chains and two epsilon chains in early embryonic hemoglobin Gower-1. Red blood cells.

Its function is as follows. The epsilon chain is a beta-type chain of early mammalian embryonic hemoglobin. The protein is Hemoglobin subunit epsilon (HBE1) of Carlito syrichta (Philippine tarsier).